The sequence spans 141 residues: Large ribosomal subunit protein bL21 (141 aa).

Residues 111-141 form a disordered region; sequence ATAPSRTEAAPESNPEAAPSAAATGIPADEE. Positions 118 to 133 are enriched in low complexity; that stretch reads EAAPESNPEAAPSAAA.

Belongs to the bacterial ribosomal protein bL21 family. In terms of assembly, part of the 50S ribosomal subunit. Contacts protein L20.

Functionally, this protein binds to 23S rRNA in the presence of protein L20. The protein is Large ribosomal subunit protein bL21 of Synechococcus sp. (strain JA-2-3B'a(2-13)) (Cyanobacteria bacterium Yellowstone B-Prime).